Here is a 401-residue protein sequence, read N- to C-terminus: Chalcone synthase 1 (401 aa).

C168 is a catalytic residue.

The protein belongs to the thiolase-like superfamily. Chalcone/stilbene synthases family.

The catalysed reaction is (E)-4-coumaroyl-CoA + 3 malonyl-CoA + 3 H(+) = 2',4,4',6'-tetrahydroxychalcone + 3 CO2 + 4 CoA. The protein operates within secondary metabolite biosynthesis; flavonoid biosynthesis. In terms of biological role, the primary product of this enzyme is 4,2',4',6'-tetrahydroxychalcone (also termed naringenin-chalcone or chalcone) which can under specific conditions spontaneously isomerize into naringenin. This Sorghum bicolor (Sorghum) protein is Chalcone synthase 1 (CHS1).